A 459-amino-acid polypeptide reads, in one-letter code: Serine protease HTRA3 (459 aa).

The first 23 residues, 1 to 23, serve as a signal peptide directing secretion; that stretch reads MQARALLPATLATLATLAVSVLA. An IGFBP N-terminal domain is found at 27 to 90; that stretch reads PAAPCPARCD…ECVRGVCRCR (64 aa). 8 disulfide bridges follow: Cys-31–Cys-54, Cys-35–Cys-56, Cys-40–Cys-57, Cys-45–Cys-60, Cys-68–Cys-82, Cys-76–Cys-87, Cys-89–Cys-107, and Cys-96–Cys-132. A Kazal-like domain is found at 76–134; it reads CGDSLECVRGVCRCRWTHTVCGTDGHTYADVCALQAASRRALQISGTPVRQLQKGACPS. Residues 181 to 346 are serine protease; sequence GSGFIMSEAG…AIPSDRITRF (166 aa). Residues His-197, Asp-233, and Ser-311 each act as charge relay system in the active site. Residues 365-450 form the PDZ domain; sequence IRMRTITPSL…EVRRGNDDLL (86 aa).

The protein belongs to the peptidase S1C family. As to quaternary structure, homotrimer. Interacts with TGFB1; the interaction inhibits TGFB-mediated signaling. Interacts with BMP4; the interaction inhibits BMP4-mediated signaling. Interacts with TGFB2, GDF5 and MYH9. Expressed in the ovary, essentially in granulosa cells in a follicle-stage specific manner. Highest levels found in large luteinizing granulosa cells.

It is found in the secreted. Its function is as follows. Serine protease that cleaves beta-casein/CSN2 as well as several extracellular matrix (ECM) proteoglycans such as decorin/DCN, biglycan/BGN and fibronectin/FN1. Inhibits signaling mediated by TGF-beta family proteins possibly indirectly by degradation of these ECM proteoglycans. May act as a tumor suppressor. Negatively regulates, in vitro, trophoblast invasion during placental development and may be involved in the development of the placenta in vivo. May also have a role in ovarian development, granulosa cell differentiation and luteinization. The chain is Serine protease HTRA3 (Htra3) from Rattus norvegicus (Rat).